We begin with the raw amino-acid sequence, 640 residues long: Envelope glycoprotein (640 aa).

A signal peptide spans 1–32 (MEGPAFSKPLKDKINPWGPLIILGILIRAGVS). The Extracellular segment spans residues 33 to 582 (VQHDSPHQVF…FNKSPWFTTL (550 aa)). 2 N-linked (GlcNAc...) asparagine; by host glycosylation sites follow: asparagine 43 and asparagine 58. Cystine bridges form between cysteine 109-cysteine 126 and cysteine 118-cysteine 131. Residue asparagine 297 is glycosylated (N-linked (GlcNAc...) asparagine; by host). Disulfide bonds link cysteine 307–cysteine 310, cysteine 307–cysteine 535, cysteine 337–cysteine 391, cysteine 356–cysteine 368, cysteine 398–cysteine 411, and cysteine 527–cysteine 534. Residues 307 to 310 (CWLC) carry the CXXC motif. N-linked (GlcNAc...) asparagine; by host glycans are attached at residues asparagine 329 and asparagine 336. Asparagine 369 is a glycosylation site (N-linked (GlcNAc...) asparagine; by host). The tract at residues 444-464 (VSLTLALLLGGLTMGGIAAGV) is fusion peptide. Positions 473 to 509 (ATQQFQQLQAAMHDDLKEVEKSITNLEKSLTSLSEVV) form a coiled coil. The segment at 510 to 526 (LQNRRGLDLLFLKEGGL) is immunosuppression. Residues 527-535 (CAALKEECC) carry the CX6CC motif. A helical membrane pass occupies residues 583–603 (ISTIMGPLIILLLILLFGPWI). Residues 604-640 (LNRLVQFIKDRISVVQALVLTQQYHQLKTIGDCKSRE) lie on the Cytoplasmic side of the membrane. The YXXL motif; contains endocytosis signal motif lies at 627–630 (YHQL).

In terms of assembly, the mature envelope protein (Env) consists of a trimer of SU-TM heterodimers attached by a labile interchain disulfide bond. Specific enzymatic cleavages in vivo yield mature proteins. Envelope glycoproteins are synthesized as an inactive precursor that is N-glycosylated and processed likely by host cell furin or by a furin-like protease in the Golgi to yield the mature SU and TM proteins. The cleavage site between SU and TM requires the minimal sequence [KR]-X-[KR]-R. The R-peptide is released from the C-terminus of the cytoplasmic tail of the TM protein upon particle formation as a result of proteolytic cleavage by the viral protease. Cleavage of this peptide is required for TM to become fusogenic. Post-translationally, the CXXC motif is highly conserved across a broad range of retroviral envelope proteins. It is thought to participate in the formation of a labile disulfide bond possibly with the CX6CC motif present in the transmembrane protein. Isomerization of the intersubunit disulfide bond to an SU intrachain disulfide bond is thought to occur upon receptor recognition in order to allow membrane fusion. In terms of processing, the R-peptide is palmitoylated.

The protein localises to the virion membrane. It localises to the host cell membrane. Its function is as follows. The surface protein (SU) attaches the virus to the host cell by binding to its receptor. This interaction triggers the refolding of the transmembrane protein (TM) and is thought to activate its fusogenic potential by unmasking its fusion peptide. Fusion occurs at the host cell plasma membrane. Functionally, the transmembrane protein (TM) acts as a class I viral fusion protein. Under the current model, the protein has at least 3 conformational states: pre-fusion native state, pre-hairpin intermediate state, and post-fusion hairpin state. During viral and target cell membrane fusion, the coiled coil regions (heptad repeats) assume a trimer-of-hairpins structure, positioning the fusion peptide in close proximity to the C-terminal region of the ectodomain. The formation of this structure appears to drive apposition and subsequent fusion of viral and target cell membranes. Membranes fusion leads to delivery of the nucleocapsid into the cytoplasm. This chain is Envelope glycoprotein (env), found in Mus musculus (Mouse).